Here is a 216-residue protein sequence, read N- to C-terminus: Large ribosomal subunit protein uL3 (216 aa).

The interval 132–157 is disordered; the sequence is FRGQGASHGTQAVHRKPGSIGGCATP.

This sequence belongs to the universal ribosomal protein uL3 family. Part of the 50S ribosomal subunit. Forms a cluster with proteins L14 and L19.

One of the primary rRNA binding proteins, it binds directly near the 3'-end of the 23S rRNA, where it nucleates assembly of the 50S subunit. This is Large ribosomal subunit protein uL3 from Saccharopolyspora erythraea (strain ATCC 11635 / DSM 40517 / JCM 4748 / NBRC 13426 / NCIMB 8594 / NRRL 2338).